The sequence spans 557 residues: Polypyrimidine tract-binding protein 1 (557 aa).

N-acetylmethionine is present on M1. Phosphoserine is present on S16. RRM domains follow at residues 59 to 143, 184 to 260, and 363 to 437; these read RVIH…SSPN, LRII…FSKL, and SVLL…LSKH. A Glycyl lysine isopeptide (Lys-Gly) (interchain with G-Cter in SUMO2) cross-link involves residue K65. A Phosphotyrosine modification is found at Y127. Position 138 is a phosphothreonine (T138). S141 carries the post-translational modification Phosphoserine. Residue K218 forms a Glycyl lysine isopeptide (Lys-Gly) (interchain with G-Cter in SUMO2) linkage. The residue at position 459 (S459) is a Phosphoserine. The region spanning 480 to 555 is the RRM 4 domain; the sequence is ATLHLSNIPP…HHLRVSFSKS (76 aa).

Monomer. Part of a ternary complex containing KHSRP, PTBP1, PTBP2 and HNRPH1. Interacts with RAVER1 and SFPQ. Interacts with IVNS1ABP (via BACK domain); the interaction is direct.

The protein localises to the nucleus. Plays a role in pre-mRNA splicing and in the regulation of alternative splicing events. Activates exon skipping of its own pre-mRNA during muscle cell differentiation. Binds to the polypyrimidine tract of introns. May promote RNA looping when bound to two separate polypyrimidine tracts in the same pre-mRNA. May promote the binding of U2 snRNP to pre-mRNA. Cooperates with RAVER1 to modulate switching between mutually exclusive exons during maturation of the TPM1 pre-mRNA. Represses the splicing of MAPT/Tau exon 10. Binds to polypyrimidine-rich controlling element (PCE) of CFTR and promotes exon skipping of CFTR exon 9, thereby antagonizing TIA1 and its role in exon inclusion of CFTR exon 9. Plays a role in the splicing of pyruvate kinase PKM by binding repressively to a polypyrimidine tract flanking PKM exon 9, inhibiting exon 9 inclusion and resulting in exon 10 inclusion and production of the PKM M2 isoform. In case of infection by picornaviruses, binds to the viral internal ribosome entry site (IRES) and stimulates the IRES-mediated translation. The protein is Polypyrimidine tract-binding protein 1 (PTBP1) of Homo sapiens (Human).